A 199-amino-acid polypeptide reads, in one-letter code: Cutinase CUT1 (199 aa).

The signal sequence occupies residues 1–18; sequence MKFTTLATLALGAVSALA. The propeptide occupies 19-27; the sequence is APVTELESR. At glutamine 28 the chain carries Pyrrolidone carboxylic acid. A disulfide bridge connects residues cysteine 31 and cysteine 105. The Nucleophile role is filled by serine 116. Cysteine 164 and cysteine 171 are disulfide-bonded. Aspartate 168 is an active-site residue. The Proton donor/acceptor role is filled by histidine 181.

This sequence belongs to the cutinase family. In terms of processing, the 2 disulfide bonds play a critical role in holding the catalytic residues in juxta-position; reduction of the disulfide bridges results in the complete inactivation of the enzyme.

The catalysed reaction is cutin + H2O = cutin monomers.. In terms of biological role, catalyzes the hydrolysis of complex carboxylic polyesters found in the cell wall of plants. Degrades cutin, a macromolecule that forms the structure of the plant cuticle. Also degrades suberin, a specialized macromolecule found in the cell wall of various plant tissues. This Coprinopsis cinerea (Inky cap fungus) protein is Cutinase CUT1.